Reading from the N-terminus, the 159-residue chain is Cyclic pyranopterin monophosphate synthase (159 aa).

Substrate-binding positions include 75–77 and 113–114; these read LCH and ME. The active site involves D128.

Belongs to the MoaC family. Homohexamer; trimer of dimers.

The enzyme catalyses (8S)-3',8-cyclo-7,8-dihydroguanosine 5'-triphosphate = cyclic pyranopterin phosphate + diphosphate. It participates in cofactor biosynthesis; molybdopterin biosynthesis. Its function is as follows. Catalyzes the conversion of (8S)-3',8-cyclo-7,8-dihydroguanosine 5'-triphosphate to cyclic pyranopterin monophosphate (cPMP). This is Cyclic pyranopterin monophosphate synthase from Cupriavidus metallidurans (strain ATCC 43123 / DSM 2839 / NBRC 102507 / CH34) (Ralstonia metallidurans).